The following is a 267-amino-acid chain: tRNA pseudouridine synthase A (267 aa).

Catalysis depends on D51, which acts as the Nucleophile. Y109 is a substrate binding site.

The protein belongs to the tRNA pseudouridine synthase TruA family. Homodimer.

It catalyses the reaction uridine(38/39/40) in tRNA = pseudouridine(38/39/40) in tRNA. In terms of biological role, formation of pseudouridine at positions 38, 39 and 40 in the anticodon stem and loop of transfer RNAs. The polypeptide is tRNA pseudouridine synthase A (Staphylococcus aureus (strain Mu3 / ATCC 700698)).